Here is a 242-residue protein sequence, read N- to C-terminus: Urease accessory protein UreF (242 aa).

The protein belongs to the UreF family. UreD, UreF and UreG form a complex that acts as a GTP-hydrolysis-dependent molecular chaperone, activating the urease apoprotein by helping to assemble the nickel containing metallocenter of UreC. The UreE protein probably delivers the nickel.

It is found in the cytoplasm. Functionally, required for maturation of urease via the functional incorporation of the urease nickel metallocenter. In Bradyrhizobium diazoefficiens (strain JCM 10833 / BCRC 13528 / IAM 13628 / NBRC 14792 / USDA 110), this protein is Urease accessory protein UreF.